Here is a 1111-residue protein sequence, read N- to C-terminus: Protein NETWORKED 1C (1111 aa).

In terms of domain architecture, NAB spans 13-93 (YSWWWDSHNT…ERYNHATGVI (81 aa)). Coiled coils occupy residues 202–287 (SESE…KESS), 314–605 (ERAS…LISE), and 642–752 (KTIG…LESK). A disordered region spans residues 850-870 (TGGGRSMRKQDGGSGRMRKQS). Residues 943–1009 (NREVNKRRVL…EGEEAIEKLF (67 aa)) are a coiled coil.

The protein belongs to the NET family.

Functionally, plant-specific actin binding protein. May be part of a membrane-cytoskeletal adapter complex. The protein is Protein NETWORKED 1C of Arabidopsis thaliana (Mouse-ear cress).